A 156-amino-acid chain; its full sequence is Endoribonuclease YbeY (156 aa).

Zn(2+) is bound by residues His111, His115, and His121.

This sequence belongs to the endoribonuclease YbeY family. The cofactor is Zn(2+).

It is found in the cytoplasm. Its function is as follows. Single strand-specific metallo-endoribonuclease involved in late-stage 70S ribosome quality control and in maturation of the 3' terminus of the 16S rRNA. This Hahella chejuensis (strain KCTC 2396) protein is Endoribonuclease YbeY.